The sequence spans 118 residues: uncharacterized protein (118 aa).

A helical membrane pass occupies residues 41 to 61; that stretch reads IFLLIIITIIFALTMYTSVQV.

It is found in the host membrane. This is an uncharacterized protein from Ostreid herpesvirus 1 (isolate France) (OsHV-1).